Reading from the N-terminus, the 133-residue chain is MTVINTLSNALSSLYNNEMRRNKQAIIMPSSKLIVNVLRVMQKEGYVGEFEYIDDGRWGKILVQLMGRINKCGAITPRYSLTYREMISLPDYIRRYLPSKEIGVIIVSTPKGVMTHKEAARQRTGGIVLGYVY.

It belongs to the universal ribosomal protein uS8 family. Part of the 30S ribosomal subunit.

Its function is as follows. One of the primary rRNA binding proteins, it binds directly to 16S rRNA central domain where it helps coordinate assembly of the platform of the 30S subunit. The polypeptide is Small ribosomal subunit protein uS8 (Metallosphaera sedula (strain ATCC 51363 / DSM 5348 / JCM 9185 / NBRC 15509 / TH2)).